Reading from the N-terminus, the 351-residue chain is sn-glycerol-3-phosphate import ATP-binding protein UgpC (351 aa).

The 232-residue stretch at 4–235 (IVLDNVRKSY…PASTFVATFI (232 aa)) folds into the ABC transporter domain. Residue 37–44 (GPSGCGKS) coordinates ATP.

It belongs to the ABC transporter superfamily. sn-glycerol-3-phosphate importer (TC 3.A.1.1.3) family. In terms of assembly, the complex is composed of two ATP-binding proteins (UgpC), two transmembrane proteins (UgpA and UgpE) and a solute-binding protein (UgpB).

Its subcellular location is the cell inner membrane. It catalyses the reaction sn-glycerol 3-phosphate(out) + ATP + H2O = sn-glycerol 3-phosphate(in) + ADP + phosphate + H(+). Functionally, part of the ABC transporter complex UgpBAEC involved in sn-glycerol-3-phosphate (G3P) import. Responsible for energy coupling to the transport system. This is sn-glycerol-3-phosphate import ATP-binding protein UgpC from Brucella abortus (strain 2308).